Reading from the N-terminus, the 78-residue chain is Translational regulator CsrA (78 aa).

The protein belongs to the CsrA/RsmA family. Homodimer; the beta-strands of each monomer intercalate to form a hydrophobic core, while the alpha-helices form wings that extend away from the core.

Its subcellular location is the cytoplasm. A translational regulator that binds mRNA to regulate translation initiation and/or mRNA stability. Usually binds in the 5'-UTR at or near the Shine-Dalgarno sequence preventing ribosome-binding, thus repressing translation. Its main target seems to be the major flagellin gene, while its function is anatagonized by FliW. The sequence is that of Translational regulator CsrA from Desulfotalea psychrophila (strain LSv54 / DSM 12343).